A 132-amino-acid chain; its full sequence is Small ribosomal subunit protein uS8 (132 aa).

It belongs to the universal ribosomal protein uS8 family. In terms of assembly, part of the 30S ribosomal subunit. Contacts proteins S5 and S12.

In terms of biological role, one of the primary rRNA binding proteins, it binds directly to 16S rRNA central domain where it helps coordinate assembly of the platform of the 30S subunit. The sequence is that of Small ribosomal subunit protein uS8 from Clostridioides difficile (strain 630) (Peptoclostridium difficile).